The primary structure comprises 207 residues: Inner membrane-spanning protein YciB (207 aa).

The next 6 helical transmembrane spans lie at 3-23 (FLFD…AEGQ), 51-71 (VLLA…WLLL), 78-98 (TMLW…VWFH), 105-125 (WKPS…HAVF), 150-170 (FMWI…AYSF), and 178-198 (FKLF…GLYL).

It belongs to the YciB family.

Its subcellular location is the cell inner membrane. Functionally, plays a role in cell envelope biogenesis, maintenance of cell envelope integrity and membrane homeostasis. The polypeptide is Inner membrane-spanning protein YciB (Methylibium petroleiphilum (strain ATCC BAA-1232 / LMG 22953 / PM1)).